Here is a 254-residue protein sequence, read N- to C-terminus: 3-deoxy-manno-octulosonate cytidylyltransferase (254 aa).

This sequence belongs to the KdsB family.

The protein resides in the cytoplasm. The enzyme catalyses 3-deoxy-alpha-D-manno-oct-2-ulosonate + CTP = CMP-3-deoxy-beta-D-manno-octulosonate + diphosphate. Its pathway is nucleotide-sugar biosynthesis; CMP-3-deoxy-D-manno-octulosonate biosynthesis; CMP-3-deoxy-D-manno-octulosonate from 3-deoxy-D-manno-octulosonate and CTP: step 1/1. The protein operates within bacterial outer membrane biogenesis; lipopolysaccharide biosynthesis. Activates KDO (a required 8-carbon sugar) for incorporation into bacterial lipopolysaccharide in Gram-negative bacteria. In Haemophilus influenzae (strain 86-028NP), this protein is 3-deoxy-manno-octulosonate cytidylyltransferase.